Here is a 200-residue protein sequence, read N- to C-terminus: Chromophore lyase CpcS/CpeS (200 aa).

It belongs to the CpcS/CpeS biliprotein lyase family.

Covalently attaches a chromophore to Cys residue(s) of phycobiliproteins. This Synechococcus sp. (strain WH8020) protein is Chromophore lyase CpcS/CpeS.